The sequence spans 220 residues: Deoxyribose-phosphate aldolase (220 aa).

D89 (proton donor/acceptor) is an active-site residue. The Schiff-base intermediate with acetaldehyde role is filled by K151. Catalysis depends on K180, which acts as the Proton donor/acceptor.

The protein belongs to the DeoC/FbaB aldolase family. DeoC type 1 subfamily.

Its subcellular location is the cytoplasm. It carries out the reaction 2-deoxy-D-ribose 5-phosphate = D-glyceraldehyde 3-phosphate + acetaldehyde. The protein operates within carbohydrate degradation; 2-deoxy-D-ribose 1-phosphate degradation; D-glyceraldehyde 3-phosphate and acetaldehyde from 2-deoxy-alpha-D-ribose 1-phosphate: step 2/2. Functionally, catalyzes a reversible aldol reaction between acetaldehyde and D-glyceraldehyde 3-phosphate to generate 2-deoxy-D-ribose 5-phosphate. This Streptococcus suis (strain 98HAH33) protein is Deoxyribose-phosphate aldolase.